Reading from the N-terminus, the 466-residue chain is Endoglucanase E-5 (466 aa).

The N-terminal stretch at 1–36 (MAKSPAARKGXPPVAVAVTAALALLIALLSPGVAQA) is a signal peptide. Positions 37–139 (AGLTATVTKE…TINGAPCDEG (103 aa)) constitute a CBM2 domain. Residues 129–166 (CTINGAPCDEGSEPGGPGGPGTPSPDPGTQPGTGTPVE) are disordered. Glu-299 acts as the Proton donor in catalysis. Catalysis depends on Glu-391, which acts as the Nucleophile.

Belongs to the glycosyl hydrolase 5 (cellulase A) family.

It carries out the reaction Endohydrolysis of (1-&gt;4)-beta-D-glucosidic linkages in cellulose, lichenin and cereal beta-D-glucans.. Its pathway is glycan metabolism; cellulose degradation. The chain is Endoglucanase E-5 (celE) from Thermobifida fusca (Thermomonospora fusca).